The sequence spans 219 residues: tRNA (guanine-N(7)-)-methyltransferase (219 aa).

S-adenosyl-L-methionine-binding residues include D47, E72, N99, and D125. The active site involves D125. K129 and D161 together coordinate substrate.

It belongs to the class I-like SAM-binding methyltransferase superfamily. TrmB family.

The catalysed reaction is guanosine(46) in tRNA + S-adenosyl-L-methionine = N(7)-methylguanosine(46) in tRNA + S-adenosyl-L-homocysteine. The protein operates within tRNA modification; N(7)-methylguanine-tRNA biosynthesis. Catalyzes the formation of N(7)-methylguanine at position 46 (m7G46) in tRNA. This is tRNA (guanine-N(7)-)-methyltransferase from Nostoc sp. (strain PCC 7120 / SAG 25.82 / UTEX 2576).